An 806-amino-acid polypeptide reads, in one-letter code: Integrin beta-7 (806 aa).

The first 19 residues, 1–19 (MVDSSTVLIFLLVLGGGQS), serve as a signal peptide directing secretion. Residues 20 to 724 (ELDTKITSSG…PQEKGVDHTR (705 aa)) are Extracellular-facing. Residues 44–92 (SCQPVPSCQKCILSHPSCAWCKQLNFTASGEAEARRCARREELLARGCP) enclose the PSI domain. Disulfide bonds link C51-C476, C54-C80, C64-C91, C216-C223, C271-C311, C412-C428, C448-C474, C478-C497, C488-C500, C502-C511, C513-C545, C527-C543, C537-C548, C550-C559, C561-C582, C566-C580, C574-C585, C587-C596, C598-C621, C605-C619, C613-C624, C626-C635, C638-C641, C645-C688, C651-C670, and C654-C666. N-linked (GlcNAc...) asparagine glycosylation occurs at N68. Over residues 98 to 107 (EPRGRQEVLQ) the composition is skewed to basic and acidic residues. The disordered stretch occupies residues 98–123 (EPRGRQEVLQDKPLSQGDRGEGATQL). Residues 150-389 (YPVDLYYLMD…QLIMDAYDSL (240 aa)) form the VWFA domain. Mg(2+)-binding residues include S161 and S163. S163, D166, D167, and D198 together coordinate Ca(2+). N250 carries N-linked (GlcNAc...) asparagine glycosylation. Ca(2+) is bound by residues N254, D256, P258, and E259. E259 provides a ligand contact to Mg(2+). Residue N279 is glycosylated (N-linked (GlcNAc...) asparagine). Residues D289 and E373 each coordinate Ca(2+). The N-linked (GlcNAc...) asparagine glycan is linked to N434. 4 consecutive I-EGF domains span residues 478 to 512 (CGDAQPHAPYCSDGQGDLQCGICSCAPGRLGQLCE), 513 to 560 (CSEA…RLCE), 561 to 597 (CDDASCERHEGILCGGFGHCQCGVCHCHANHTGRACE), and 598 to 636 (CSKSVDSCVSPEGGLCSGHGYCKCNRCQCLDGYYGALCD). Residue N531 is glycosylated (N-linked (GlcNAc...) asparagine). N590 carries N-linked (GlcNAc...) asparagine glycosylation. N-linked (GlcNAc...) asparagine glycans are attached at residues N665 and N674. Residues 725–745 (AIILGCTGGIVAVGLGLVLAY) traverse the membrane as a helical segment. Over 746–806 (RLSVEIYDRR…PSLSLTREAD (61 aa)) the chain is Cytoplasmic. The tract at residues 786-806 (NPRFQGTNGRSPSLSLTREAD) is disordered.

It belongs to the integrin beta chain family. As to quaternary structure, heterodimer of an alpha and a beta subunit. ITGB7/beta-7 associates with either ITGA4/alpha-4 or ITGAE/alpha-E. Integrin ITGA4/ITGB7 interacts with MADCAM1. Integrin ITGA4/ITGB7 interacts with VCAM1 and fibronectin. Interacts with FLNA (via filamin repeats 4, 9, 12, 17, 19, 21, and 23).

It localises to the cell membrane. Functionally, integrin ITGA4/ITGB7 (alpha-4/beta-7) (Peyer patches-specific homing receptor LPAM-1) is an adhesion molecule that mediates lymphocyte migration and homing to gut-associated lymphoid tissue (GALT). Integrin ITGA4/ITGB7 interacts with the cell surface adhesion molecules MADCAM1 which is normally expressed by the vascular endothelium of the gastrointestinal tract. Also interacts with VCAM1 and fibronectin, an extracellular matrix component. It recognizes one or more domains within the alternatively spliced CS-1 region of fibronectin. Interactions involve the tripeptide L-D-T in MADCAM1, and L-D-V in fibronectin. Integrin ITGAE/ITGB7 (alpha-E/beta-7, HML-1) is a receptor for E-cadherin. This chain is Integrin beta-7 (Itgb7), found in Mus musculus (Mouse).